A 338-amino-acid chain; its full sequence is Tagatose 1,6-diphosphate aldolase (338 aa).

Belongs to the aldolase LacD family.

The enzyme catalyses D-tagatofuranose 1,6-bisphosphate = D-glyceraldehyde 3-phosphate + dihydroxyacetone phosphate. Its pathway is carbohydrate metabolism; D-tagatose 6-phosphate degradation; D-glyceraldehyde 3-phosphate and glycerone phosphate from D-tagatose 6-phosphate: step 2/2. The protein is Tagatose 1,6-diphosphate aldolase of Listeria innocua serovar 6a (strain ATCC BAA-680 / CLIP 11262).